The sequence spans 50 residues: MKVLASLKQAKLRHRDCQVVKRRGRLYVICKSNPRFKCVQGRPKPKIKRR.

The protein belongs to the bacterial ribosomal protein bL36 family.

This Pseudomonas aeruginosa (strain UCBPP-PA14) protein is Large ribosomal subunit protein bL36B.